The primary structure comprises 437 residues: Serine--tRNA ligase (437 aa).

244 to 246 (TAE) provides a ligand contact to L-serine. 275-277 (RSE) contributes to the ATP binding site. Residue Glu-298 coordinates L-serine. 362 to 365 (EISS) contacts ATP. Position 397 (Ser-397) interacts with L-serine.

The protein belongs to the class-II aminoacyl-tRNA synthetase family. Type-1 seryl-tRNA synthetase subfamily. In terms of assembly, homodimer. The tRNA molecule binds across the dimer.

The protein localises to the cytoplasm. It carries out the reaction tRNA(Ser) + L-serine + ATP = L-seryl-tRNA(Ser) + AMP + diphosphate + H(+). It catalyses the reaction tRNA(Sec) + L-serine + ATP = L-seryl-tRNA(Sec) + AMP + diphosphate + H(+). It functions in the pathway aminoacyl-tRNA biosynthesis; selenocysteinyl-tRNA(Sec) biosynthesis; L-seryl-tRNA(Sec) from L-serine and tRNA(Sec): step 1/1. In terms of biological role, catalyzes the attachment of serine to tRNA(Ser). Is also able to aminoacylate tRNA(Sec) with serine, to form the misacylated tRNA L-seryl-tRNA(Sec), which will be further converted into selenocysteinyl-tRNA(Sec). In Nitrosomonas europaea (strain ATCC 19718 / CIP 103999 / KCTC 2705 / NBRC 14298), this protein is Serine--tRNA ligase.